Here is a 478-residue protein sequence, read N- to C-terminus: Cytochrome c-552 (478 aa).

A signal peptide spans 1–26 (MTRIKINARRIFSLLIPFFFFTSVHA). Position 94 (His-94) interacts with heme c. The heme site is built by Cys-122, Cys-125, and Lys-126. Heme c-binding residues include Cys-160, Cys-163, His-164, Cys-209, Cys-212, and His-213. Residues Glu-215, Tyr-216, Lys-261, and Gln-263 each contribute to the Ca(2+) site. Tyr-216 is a substrate binding site. His-264 lines the substrate pocket. The heme c site is built by His-275, Cys-282, Cys-285, His-286, His-301, Cys-314, Cys-317, His-318, and His-393.

It belongs to the cytochrome c-552 family. Ca(2+) serves as cofactor. Heme c is required as a cofactor.

The protein localises to the periplasm. The enzyme catalyses 6 Fe(III)-[cytochrome c] + NH4(+) + 2 H2O = 6 Fe(II)-[cytochrome c] + nitrite + 8 H(+). It functions in the pathway nitrogen metabolism; nitrate reduction (assimilation). Functionally, catalyzes the reduction of nitrite to ammonia, consuming six electrons in the process. In Escherichia coli O17:K52:H18 (strain UMN026 / ExPEC), this protein is Cytochrome c-552.